A 118-amino-acid polypeptide reads, in one-letter code: Small ribosomal subunit protein uS13 (118 aa).

The interval 93-118 is disordered; the sequence is RGLPVRGQRTKTNARTRKGPRKPIRK.

This sequence belongs to the universal ribosomal protein uS13 family. Part of the 30S ribosomal subunit. Forms a loose heterodimer with protein S19. Forms two bridges to the 50S subunit in the 70S ribosome.

Functionally, located at the top of the head of the 30S subunit, it contacts several helices of the 16S rRNA. In the 70S ribosome it contacts the 23S rRNA (bridge B1a) and protein L5 of the 50S subunit (bridge B1b), connecting the 2 subunits; these bridges are implicated in subunit movement. Contacts the tRNAs in the A and P-sites. In Pseudomonas paraeruginosa (strain DSM 24068 / PA7) (Pseudomonas aeruginosa (strain PA7)), this protein is Small ribosomal subunit protein uS13.